A 343-amino-acid chain; its full sequence is UDP-3-O-(3-hydroxymyristoyl)glucosamine N-acyltransferase (343 aa).

The active-site Proton acceptor is His239.

This sequence belongs to the transferase hexapeptide repeat family. LpxD subfamily. Homotrimer.

It carries out the reaction a UDP-3-O-[(3R)-3-hydroxyacyl]-alpha-D-glucosamine + a (3R)-hydroxyacyl-[ACP] = a UDP-2-N,3-O-bis[(3R)-3-hydroxyacyl]-alpha-D-glucosamine + holo-[ACP] + H(+). It catalyses the reaction UDP-3-O-[(3R)-3-hydroxytetradecanoyl]-alpha-D-glucosamine + (3R)-hydroxytetradecanoyl-[ACP] = UDP-2-N,3-O-bis[(3R)-3-hydroxytetradecanoyl]-alpha-D-glucosamine + holo-[ACP] + H(+). It functions in the pathway glycolipid biosynthesis; lipid IV(A) biosynthesis; lipid IV(A) from (3R)-3-hydroxytetradecanoyl-[acyl-carrier-protein] and UDP-N-acetyl-alpha-D-glucosamine: step 3/6. In terms of biological role, catalyzes the N-acylation of UDP-3-O-(hydroxytetradecanoyl)glucosamine using 3-hydroxytetradecanoyl-ACP as the acyl donor. Is involved in the biosynthesis of lipid A, a phosphorylated glycolipid that anchors the lipopolysaccharide to the outer membrane of the cell. This chain is UDP-3-O-(3-hydroxymyristoyl)glucosamine N-acyltransferase, found in Blochmanniella pennsylvanica (strain BPEN).